The primary structure comprises 96 residues: YcgL domain-containing protein Csal_1462 (96 aa).

Residues 4 to 88 enclose the YcgL domain; the sequence is RLCEIFKSPR…ARESYLLDLY (85 aa).

The polypeptide is YcgL domain-containing protein Csal_1462 (Chromohalobacter salexigens (strain ATCC BAA-138 / DSM 3043 / CIP 106854 / NCIMB 13768 / 1H11)).